A 604-amino-acid polypeptide reads, in one-letter code: MLLKELSSLASPLSQPQVEKLKQLTAELNAVQLAWVSGYLAATANASGNLAQLAPVSDAQAAQTVTILYGSQTGNGRGIAKALAEKAKAQGYSVNLASMGEYNVRQLKQETLLLLVVSTHGEGEAPDDAIELHKFLASKRAPQLNNLHYSVLALGDSSYEFFCQTGKDFDARLSALGAKALLPLVECDVDYEAAAGQWHADVLSAVKPLIQTTANVVALNDTSSALAASESEFTKQNPYSAEVLVSQKITGRGSDRDVRHVEIDLGESGLRYEVGDALGVWFSNNETLVDEILAGLGLAADTKVTVANESISLKQALIEKKELTQLYPGLVKAWAELSASPELLALSEDKEQVRQFILHHQFADLVANYQLKADANLDANKLVELLRPLTPRLYSIASSQSEVDTEVHLTVALVEDEHQGQARFGGASHFLASAEEGAEVKVYVEPNKHFRLPEDPQTPVIMIGPGTGVAPFRAFMQERVAQGAEGDSWLFFGNPHFEQDFLYQTEWQQYLKNGDLTRIDVAFSRDQAHKIYVQHRIKEQGQTLWQWLQNGAHLYICGDAERMAKDVHQALLGVAVEFGGLSSEAAEEYFETLRSHKRYQKDVY.

One can recognise a Flavodoxin-like domain in the interval 65-203; the sequence is VTILYGSQTG…AAGQWHADVL (139 aa). FMN-binding positions include 71-76, 118-121, and 154-163; these read SQTGNG, STHG, and LGDSSYEFFC. The FAD-binding FR-type domain maps to 236–453; that stretch reads QNPYSAEVLV…VEPNKHFRLP (218 aa). Residues Thr324, Leu358, 392 to 395, 410 to 412, and 425 to 428 each bind FAD; these read RLYS, TVA, and GGAS. NADP(+) is bound by residues 524–525, 530–534, and Asp566; these read SR and KIYVQ. Residue Tyr604 coordinates FAD.

The protein belongs to the NADPH-dependent sulphite reductase flavoprotein subunit CysJ family. In the N-terminal section; belongs to the flavodoxin family. This sequence in the C-terminal section; belongs to the flavoprotein pyridine nucleotide cytochrome reductase family. In terms of assembly, alpha(8)-beta(8). The alpha component is a flavoprotein, the beta component is a hemoprotein. Requires FAD as cofactor. FMN is required as a cofactor.

It catalyses the reaction hydrogen sulfide + 3 NADP(+) + 3 H2O = sulfite + 3 NADPH + 4 H(+). The protein operates within sulfur metabolism; hydrogen sulfide biosynthesis; hydrogen sulfide from sulfite (NADPH route): step 1/1. Component of the sulfite reductase complex that catalyzes the 6-electron reduction of sulfite to sulfide. This is one of several activities required for the biosynthesis of L-cysteine from sulfate. The flavoprotein component catalyzes the electron flow from NADPH -&gt; FAD -&gt; FMN to the hemoprotein component. This Shewanella sp. (strain MR-4) protein is Sulfite reductase [NADPH] flavoprotein alpha-component.